The primary structure comprises 569 residues: Vacuolar protein sorting-associated protein 45 homolog (569 aa).

Belongs to the STXBP/unc-18/SEC1 family. Interacts with both SYP41 or SYP42 and VTI12, but in different domains of the trans-Golgi network. Does not interact on the pervacuolar compartment with VTI11, SYP21 or SYP22, or on the cis-Golgi with SYP31. Interacts at the trans-Golgi network (TGN) with the SYP41/SYP61/VTI12 SNARE complex. In terms of tissue distribution, highly expressed in roots, lower expression in leaves, stems and flowers.

It is found in the golgi apparatus. It localises to the trans-Golgi network membrane. The protein resides in the early endosome. Involved in the protein transport to the vacuole, probably at the level of vesicle fusion at the trans-Golgi network (TGN) and not in transport from the TGN to the prevacuolar compartment, by promoting the recycling of vacuolar sorting receptors back to the TGN. Involved in early endosomal vesicle trafficking, particularly at the trans-Golgi-network/early endosome (TGN/EE) thus residing in early endocytic route. Together with BIG5/BEN1 required for polar PIN-FORMED (PIN) proteins localization, for their dynamic repolarization, and consequently for auxin activity gradient formation and auxin-related developmental processes (e.g. embryonic patterning, organogenesis and vasculature venation patterning). Necessary for pollen germination and for cell expansion. Binds syntaxins. In Arabidopsis thaliana (Mouse-ear cress), this protein is Vacuolar protein sorting-associated protein 45 homolog.